The primary structure comprises 311 residues: Mediator of RNA polymerase II transcription subunit 27 (311 aa).

Serine 132 carries the phosphoserine modification. Lysine 134 bears the N6-methyllysine mark.

This sequence belongs to the Mediator complex subunit 27 family. As to quaternary structure, component of the Mediator complex, which is composed of MED1, MED4, MED6, MED7, MED8, MED9, MED10, MED11, MED12, MED13, MED13L, MED14, MED15, MED16, MED17, MED18, MED19, MED20, MED21, MED22, MED23, MED24, MED25, MED26, MED27, MED29, MED30, MED31, CCNC, CDK8 and CDC2L6/CDK11. The MED12, MED13, CCNC and CDK8 subunits form a distinct module termed the CDK8 module. Mediator containing the CDK8 module is less active than Mediator lacking this module in supporting transcriptional activation. Individual preparations of the Mediator complex lacking one or more distinct subunits have been variously termed ARC, CRSP, DRIP, PC2, SMCC and TRAP.

Its subcellular location is the nucleus. Component of the Mediator complex, a coactivator involved in the regulated transcription of nearly all RNA polymerase II-dependent genes. Mediator functions as a bridge to convey information from gene-specific regulatory proteins to the basal RNA polymerase II transcription machinery. Mediator is recruited to promoters by direct interactions with regulatory proteins and serves as a scaffold for the assembly of a functional preinitiation complex with RNA polymerase II and the general transcription factors. The chain is Mediator of RNA polymerase II transcription subunit 27 (MED27) from Sus scrofa (Pig).